Here is a 595-residue protein sequence, read N- to C-terminus: SVP1-like protein 2 (595 aa).

Positions 1–28 are disordered; that stretch reads MVLAHSINTNPNTNTNTNNTSTTSSTTT. One copy of the WD 1 repeat lies at 30–68; it reads PNDSKILCINFNQDQGCFAISHEQGFLVYNTDPIELRVK. Low complexity-rich tracts occupy residues 76-112 and 270-339; these read HTTS…GSNN and LSPT…TTTT. 2 disordered regions span residues 76–132 and 264–342; these read HTTS…GSGS and FSKR…TSAK. 2 WD repeats span residues 389 to 429 and 434 to 473; these read AHKS…LLYE and IDRA…YPND. The tract at residues 467–490 is disordered; sequence ETQYPNDGGSGGTKDGGGGGRGSK. Residues 474–488 are compositionally biased toward gly residues; that stretch reads GGSGGTKDGGGGGRG.

The protein belongs to the WD repeat PROPPIN family.

It localises to the vacuole membrane. Its subcellular location is the cytoplasmic vesicle membrane. In terms of biological role, involved in mitochondrial or peroxisomal functions and amino acid signaling pathways. This Candida albicans (strain SC5314 / ATCC MYA-2876) (Yeast) protein is SVP1-like protein 2 (HSV2).